A 79-amino-acid chain; its full sequence is Short neurotoxin 6 (79 aa).

A signal peptide spans 1–21 (MKTLLLTLVMVTIMCLDLGYT). 4 cysteine pairs are disulfide-bonded: Cys-24–Cys-41, Cys-34–Cys-59, Cys-63–Cys-71, and Cys-72–Cys-77.

Belongs to the three-finger toxin family. Short-chain subfamily. Type III alpha-neurotoxin sub-subfamily. In terms of tissue distribution, expressed by the venom gland.

Its subcellular location is the secreted. Binds with high affinity to muscle nicotinic acetylcholine receptor (nAChR) and hinders acetylcholine binding to the receptor, thereby impairing neuromuscular transmission. Competes with the binding of alpha-bungarotoxin on muscle AChR (from Torpedo) with an IC(50) of 0.18 uM. Causes muscle paralysis, spasms and increased respiration. The polypeptide is Short neurotoxin 6 (Pseudonaja textilis (Eastern brown snake)).